The primary structure comprises 370 residues: Maturase K (370 aa).

Belongs to the intron maturase 2 family. MatK subfamily.

Its subcellular location is the plastid. The protein resides in the chloroplast. Its function is as follows. Usually encoded in the trnK tRNA gene intron. Probably assists in splicing its own and other chloroplast group II introns. The protein is Maturase K of Marchantia polymorpha (Common liverwort).